We begin with the raw amino-acid sequence, 238 residues long: DNA repair protein RecO (238 aa).

Belongs to the RecO family.

Involved in DNA repair and RecF pathway recombination. The polypeptide is DNA repair protein RecO (Flavobacterium psychrophilum (strain ATCC 49511 / DSM 21280 / CIP 103535 / JIP02/86)).